The primary structure comprises 180 residues: UPF0227 protein YcfP (180 aa).

It belongs to the UPF0227 family.

The protein is UPF0227 protein YcfP of Escherichia coli O7:K1 (strain IAI39 / ExPEC).